A 356-amino-acid chain; its full sequence is Protein-glutamate methylesterase/protein-glutamine glutaminase 2 (356 aa).

One can recognise a Response regulatory domain in the interval 4-121; the sequence is KVLIVDDSAV…KGFLEESSHE (118 aa). Residue Asp55 is modified to 4-aspartylphosphate. One can recognise a CheB-type methylesterase domain in the interval 169 to 356; that stretch reads FATTERIIAI…LELIAKAICR (188 aa). Residues Ser181, His207, and Asp303 contribute to the active site.

This sequence belongs to the CheB family. Post-translationally, phosphorylated by CheA. Phosphorylation of the N-terminal regulatory domain activates the methylesterase activity.

The protein localises to the cytoplasm. The enzyme catalyses [protein]-L-glutamate 5-O-methyl ester + H2O = L-glutamyl-[protein] + methanol + H(+). The catalysed reaction is L-glutaminyl-[protein] + H2O = L-glutamyl-[protein] + NH4(+). Its function is as follows. Involved in chemotaxis. Part of a chemotaxis signal transduction system that modulates chemotaxis in response to various stimuli. Catalyzes the demethylation of specific methylglutamate residues introduced into the chemoreceptors (methyl-accepting chemotaxis proteins or MCP) by CheR. Also mediates the irreversible deamidation of specific glutamine residues to glutamic acid. The sequence is that of Protein-glutamate methylesterase/protein-glutamine glutaminase 2 from Chromobacterium violaceum (strain ATCC 12472 / DSM 30191 / JCM 1249 / CCUG 213 / NBRC 12614 / NCIMB 9131 / NCTC 9757 / MK).